Here is a 944-residue protein sequence, read N- to C-terminus: MEYNFREIEKKWQQRWAENHTYQVTEDESKKKFYVLNMFPYPSGAGLHVGHPLGYIASDIYARYKRLQGFNVLNPMGYDAYGLPAEQYAIQTGQHPAITTVNNINRYREQLDKIGFSFDWNREVRTCEPGYYHWTQWAFQQMFNSYYCNDTQQARPISELTEAFARYGNEGLNAACSEELSFTAEEWNAKSEKEQQEILMNYRIAYLGETMVNWCPQLGTVLANDEVVDGVSERGGFPVVQKKMRQWCLRVSAYAQRLLDGLDTVDWTDSLKETQRNWIGRSEGTEVQFKVKDSDIEFTIFTTRADTMFGVTFMVLAPESELVPQLTTEAQKAEVEAYLDRTKKRTERERIADRRVTGVFSGSYAINPFTGEAVPVWISDYVLAGYGTGAIMAVPAHDSRDYAFAKHFNLPIVPLVEGCDVSEESFDAKEGIVCNSPRKDVTPYCDLSLNGLTIKEAIAATKEYVKAHNLGRVKVNYRLRDAIFSRQRYWGEPFPVYYKNGMPYMIDSSKLPLELPEVAKFLPTETGEPPLGHATKWAWDVEKGEVVENNLIDNVTIFPLELNTMPGFAGSSAYYLRYMDPHNAQALVSEKADHYWQNVDLYVGGTEHATGHLIYSRFWNKFLHDLGVSIKEEPFQKLVNQGMIQGRSNFVYRIKDTNTFVSLNLKDQYETTPLHVDVNIVSNDILDVEAFKAWRPEYNDAEFILEDGKYICGWAVEKMSKSMYNVVNPDMIVEKYGADTLRMYEMFLGPVEQSKPWDTNGIDGVHRFLKKLWNLFYSRTDEFLPVEGEPTKEELKAIHKLIKKVTGDIETFSYNTSISAFMICVNELTSLKCRNKEVLSNLIILLAPFAPHYAEELWEALGNTTSVCDAQWPAFNEDYLKEDTVKYTISFNGKARFTMDFAADADNNTIQTTVMADEQAQKWIEGKTPKKVIIVPKKIVNIVL.

The 'HIGH' region motif lies at 40 to 51 (PYPSGAGLHVGH). The 'KMSKS' region signature appears at 718–722 (KMSKS). Lys721 contributes to the ATP binding site.

Belongs to the class-I aminoacyl-tRNA synthetase family.

Its subcellular location is the cytoplasm. It catalyses the reaction tRNA(Leu) + L-leucine + ATP = L-leucyl-tRNA(Leu) + AMP + diphosphate. The sequence is that of Leucine--tRNA ligase from Phocaeicola vulgatus (strain ATCC 8482 / DSM 1447 / JCM 5826 / CCUG 4940 / NBRC 14291 / NCTC 11154) (Bacteroides vulgatus).